A 312-amino-acid polypeptide reads, in one-letter code: Cytochrome f (312 aa).

The first 28 residues, 1 to 28 (MQISKFFKFVFISVSLCGSLLFPQMANA), serve as a signal peptide directing secretion. Residues Tyr29, Cys49, Cys52, and His53 each contribute to the heme site. The helical transmembrane segment at 278–298 (VKGMIAFFFTVTVAQILLVLK) threads the bilayer.

The protein belongs to the cytochrome f family. In terms of assembly, the 4 large subunits of the cytochrome b6-f complex are cytochrome b6, subunit IV (17 kDa polypeptide, petD), cytochrome f and the Rieske protein, while the 4 small subunits are PetG, PetL, PetM and PetN. The complex functions as a dimer. The cofactor is heme.

The protein localises to the plastid. The protein resides in the chloroplast thylakoid membrane. Component of the cytochrome b6-f complex, which mediates electron transfer between photosystem II (PSII) and photosystem I (PSI), cyclic electron flow around PSI, and state transitions. This Emiliania huxleyi (Coccolithophore) protein is Cytochrome f.